Consider the following 340-residue polypeptide: Anthranilate phosphoribosyltransferase (340 aa).

5-phospho-alpha-D-ribose 1-diphosphate is bound by residues Gly78, 81 to 82, Thr86, 88 to 91, 106 to 114, and Ser118; these read GD, NIST, and KHGNRSVSS. Gly78 lines the anthranilate pocket. Residue Ser90 coordinates Mg(2+). Asn109 provides a ligand contact to anthranilate. Position 164 (Arg164) interacts with anthranilate. Residues Asp223 and Glu224 each coordinate Mg(2+).

This sequence belongs to the anthranilate phosphoribosyltransferase family. In terms of assembly, homodimer. Requires Mg(2+) as cofactor.

The catalysed reaction is N-(5-phospho-beta-D-ribosyl)anthranilate + diphosphate = 5-phospho-alpha-D-ribose 1-diphosphate + anthranilate. It participates in amino-acid biosynthesis; L-tryptophan biosynthesis; L-tryptophan from chorismate: step 2/5. In terms of biological role, catalyzes the transfer of the phosphoribosyl group of 5-phosphorylribose-1-pyrophosphate (PRPP) to anthranilate to yield N-(5'-phosphoribosyl)-anthranilate (PRA). This chain is Anthranilate phosphoribosyltransferase, found in Bacillus pumilus (strain SAFR-032).